We begin with the raw amino-acid sequence, 438 residues long: Na(+)/H(+) antiporter NhaA (438 aa).

11 consecutive transmembrane segments (helical) span residues 23-43 (FGGIFLFLNAVLAMVVANSFL), 62-82 (FFIGFSLHNWIDDVLMALFFL), 104-124 (SFPVIAAIGGMIAPGLIYFFL), 133-153 (GFGIPMATDIAFALGVIMLLG), 162-182 (VFLITLAVADDLGAIVVIALF), 185-205 (TNLKFAWLLGALGVVLVLAIL), 212-232 (SLIPYLLLGVLLWFCVHQSGI), 302-322 (FLAPISGYFIMPLFAFANAGV), 337-357 (LGVILGLCLGKPLGIFLITFI), 372-392 (WWHILGAGLLAGIGFTMSMFI), and 410-430 (IAILLGSLISGIIGALYLFAL).

The protein belongs to the NhaA Na(+)/H(+) (TC 2.A.33) antiporter family.

The protein resides in the cell inner membrane. The enzyme catalyses Na(+)(in) + 2 H(+)(out) = Na(+)(out) + 2 H(+)(in). Na(+)/H(+) antiporter that extrudes sodium in exchange for external protons. This chain is Na(+)/H(+) antiporter NhaA, found in Helicobacter pylori (strain J99 / ATCC 700824) (Campylobacter pylori J99).